Consider the following 236-residue polypeptide: Segregation and condensation protein A (236 aa).

The protein belongs to the ScpA family. As to quaternary structure, component of a cohesin-like complex composed of ScpA, ScpB and the Smc homodimer, in which ScpA and ScpB bind to the head domain of Smc. The presence of the three proteins is required for the association of the complex with DNA.

It localises to the cytoplasm. Its function is as follows. Participates in chromosomal partition during cell division. May act via the formation of a condensin-like complex containing Smc and ScpB that pull DNA away from mid-cell into both cell halves. The polypeptide is Segregation and condensation protein A (Streptococcus sanguinis (strain SK36)).